The sequence spans 432 residues: Heme-based aerotactic transducer HemAT (432 aa).

One can recognise a Methyl-accepting transducer domain in the interval 184-420 (YNQTRDEQEE…EVSRAVSHVA (237 aa)).

The protein belongs to the methyl-accepting chemotaxis (MCP) protein family. Homotetramer.

Its function is as follows. Heme-containing signal transducer responsible for aerotaxis, the migratory response toward or away from oxygen. The polypeptide is Heme-based aerotactic transducer HemAT (hemAT) (Bacillus subtilis (strain 168)).